Here is a 745-residue protein sequence, read N- to C-terminus: Photosystem I P700 chlorophyll a apoprotein A2 (745 aa).

The next 8 helical transmembrane spans lie at 49–72, 138–161, 178–202, 276–294, 338–361, 377–403, 425–447, and 528–546; these read LFAT…FHIA, LYAG…LHLQ, LNHH…HVAI, MAHH…GHMY, LHFQ…QHMY, AALY…IFLV, AIIS…LYVH, and FLVH…LILV. Residues Cys570 and Cys579 each contribute to the [4Fe-4S] cluster site. The next 2 membrane-spanning stretches (helical) occupy residues 586–607 and 654–676; these read AFYL…YWHW and LAVW…MFLI. Residues His665, Met673, and Tyr681 each coordinate chlorophyll a. Trp682 contacts phylloquinone. The helical transmembrane segment at 718-738 threads the bilayer; that stretch reads LVGLAHFTVGYVLTYAAFVIA.

The protein belongs to the PsaA/PsaB family. The PsaA/B heterodimer binds the P700 chlorophyll special pair and subsequent electron acceptors. PSI consists of a core antenna complex that captures photons, and an electron transfer chain that converts photonic excitation into a charge separation. The cyanobacterial PSI reaction center is composed of one copy each of PsaA,B,C,D,E,F,I,J,K,L,M and X, and forms trimeric complexes. PSI electron transfer chain: 5 chlorophyll a, 1 chlorophyll a', 2 phylloquinones and 3 4Fe-4S clusters. PSI core antenna: 90 chlorophyll a, 22 carotenoids, 3 phospholipids and 1 galactolipid. P700 is a chlorophyll a/chlorophyll a' dimer, A0 is one or more chlorophyll a, A1 is one or both phylloquinones and FX is a shared 4Fe-4S iron-sulfur center. is required as a cofactor.

It is found in the cellular thylakoid membrane. It carries out the reaction reduced [plastocyanin] + hnu + oxidized [2Fe-2S]-[ferredoxin] = oxidized [plastocyanin] + reduced [2Fe-2S]-[ferredoxin]. Functionally, psaA and PsaB bind P700, the primary electron donor of photosystem I (PSI), as well as the electron acceptors A0, A1 and FX. PSI is a plastocyanin/cytochrome c6-ferredoxin oxidoreductase, converting photonic excitation into a charge separation, which transfers an electron from the donor P700 chlorophyll pair to the spectroscopically characterized acceptors A0, A1, FX, FA and FB in turn. Oxidized P700 is reduced on the lumenal side of the thylakoid membrane by plastocyanin or cytochrome c6. The polypeptide is Photosystem I P700 chlorophyll a apoprotein A2 (Synechococcus sp. (strain JA-3-3Ab) (Cyanobacteria bacterium Yellowstone A-Prime)).